A 360-amino-acid polypeptide reads, in one-letter code: 3-dehydroquinate synthase (360 aa).

NAD(+)-binding positions include 71–76, 105–109, 129–130, lysine 142, lysine 151, and 169–172; these read DGEQYK, GVIGD, TT, and CLDT. Zn(2+) is bound by residues glutamate 184, histidine 247, and histidine 264.

Belongs to the sugar phosphate cyclases superfamily. Dehydroquinate synthase family. The cofactor is Co(2+). It depends on Zn(2+) as a cofactor. NAD(+) serves as cofactor.

The protein localises to the cytoplasm. It catalyses the reaction 7-phospho-2-dehydro-3-deoxy-D-arabino-heptonate = 3-dehydroquinate + phosphate. It functions in the pathway metabolic intermediate biosynthesis; chorismate biosynthesis; chorismate from D-erythrose 4-phosphate and phosphoenolpyruvate: step 2/7. In terms of biological role, catalyzes the conversion of 3-deoxy-D-arabino-heptulosonate 7-phosphate (DAHP) to dehydroquinate (DHQ). This Erwinia tasmaniensis (strain DSM 17950 / CFBP 7177 / CIP 109463 / NCPPB 4357 / Et1/99) protein is 3-dehydroquinate synthase.